The primary structure comprises 280 residues: Large ribosomal subunit protein uL2 (280 aa).

The segment at 213–280 (RWKGKRPSVR…RRRTGKKHAR (68 aa)) is disordered. A compositionally biased stretch (basic residues) spans 268 to 280 (IVRRRRTGKKHAR).

Belongs to the universal ribosomal protein uL2 family. Part of the 50S ribosomal subunit. Forms a bridge to the 30S subunit in the 70S ribosome.

One of the primary rRNA binding proteins. Required for association of the 30S and 50S subunits to form the 70S ribosome, for tRNA binding and peptide bond formation. It has been suggested to have peptidyltransferase activity; this is somewhat controversial. Makes several contacts with the 16S rRNA in the 70S ribosome. This Mycobacterium leprae (strain Br4923) protein is Large ribosomal subunit protein uL2.